The sequence spans 244 residues: 5-oxoprolinase subunit A (244 aa).

It belongs to the LamB/PxpA family. As to quaternary structure, forms a complex composed of PxpA, PxpB and PxpC.

It carries out the reaction 5-oxo-L-proline + ATP + 2 H2O = L-glutamate + ADP + phosphate + H(+). Catalyzes the cleavage of 5-oxoproline to form L-glutamate coupled to the hydrolysis of ATP to ADP and inorganic phosphate. The chain is 5-oxoprolinase subunit A from Shigella sonnei (strain Ss046).